A 206-amino-acid chain; its full sequence is Large ribosomal subunit protein uL4 (206 aa).

Residues 49 to 76 are disordered; that stretch reads QSAKTRTEVRGGGIKPWRQKGTGRARQG.

The protein belongs to the universal ribosomal protein uL4 family. Part of the 50S ribosomal subunit.

Its function is as follows. One of the primary rRNA binding proteins, this protein initially binds near the 5'-end of the 23S rRNA. It is important during the early stages of 50S assembly. It makes multiple contacts with different domains of the 23S rRNA in the assembled 50S subunit and ribosome. Forms part of the polypeptide exit tunnel. This is Large ribosomal subunit protein uL4 from Clostridium botulinum (strain Alaska E43 / Type E3).